Consider the following 162-residue polypeptide: Interleukin-15 (162 aa).

The signal sequence occupies residues 1–29 (MRISKPHLRSVSIQCYLCLLLNSHFLTEA). Positions 30–48 (GIHVFILGCFSAGLPKTEA) are excised as a propeptide. Cystine bridges form between C83-C133 and C90-C136. N127 carries an N-linked (GlcNAc...) asparagine glycan.

It belongs to the IL-15/IL-21 family.

The protein resides in the secreted. Functionally, cytokine that plays a major role in the development of inflammatory and protective immune responses to microbial invaders and parasites by modulating immune cells of both the innate and adaptive immune systems. Stimulates the proliferation of natural killer cells, T-cells and B-cells and promotes the secretion of several cytokines. In monocytes, induces the production of IL8 and monocyte chemotactic protein 1/CCL2, two chemokines that attract neutrophils and monocytes respectively to sites of infection. Unlike most cytokines, which are secreted in soluble form, IL15 is expressed in association with its high affinity IL15RA on the surface of IL15-producing cells and delivers signals to target cells that express IL2RB and IL2RG receptor subunits. Binding to its receptor triggers the phosphorylation of JAK1 and JAK3 and the recruitment and subsequent phosphorylation of signal transducer and activator of transcription-3/STAT3 and STAT5. In mast cells, induces the rapid tyrosine phosphorylation of STAT6 and thereby controls mast cell survival and release of cytokines such as IL4. The polypeptide is Interleukin-15 (IL15) (Macaca mulatta (Rhesus macaque)).